The following is a 545-amino-acid chain: Chaperonin GroEL (545 aa).

ATP is bound by residues 30–33 (TLGP), Lys51, 87–91 (DGTTT), Gly415, 483–485 (NAA), and Asp499.

The protein belongs to the chaperonin (HSP60) family. In terms of assembly, forms a cylinder of 14 subunits composed of two heptameric rings stacked back-to-back. Interacts with the co-chaperonin GroES.

It is found in the cytoplasm. The enzyme catalyses ATP + H2O + a folded polypeptide = ADP + phosphate + an unfolded polypeptide.. Its function is as follows. Together with its co-chaperonin GroES, plays an essential role in assisting protein folding. The GroEL-GroES system forms a nano-cage that allows encapsulation of the non-native substrate proteins and provides a physical environment optimized to promote and accelerate protein folding. The polypeptide is Chaperonin GroEL (Aquifex aeolicus (strain VF5)).